Here is a 181-residue protein sequence, read N- to C-terminus: RNA pyrophosphohydrolase (181 aa).

Residues 6–149 (GFRPNVGIIL…KRRVYTRALQ (144 aa)) enclose the Nudix hydrolase domain. A Nudix box motif is present at residues 38 to 59 (GGIKAQETPEEALFRELEEEVG). Positions 159 to 181 (GLPRQPPVGRPRRSAPPRGCRRA) are disordered. Basic residues predominate over residues 168-181 (RPRRSAPPRGCRRA).

This sequence belongs to the Nudix hydrolase family. RppH subfamily. Requires a divalent metal cation as cofactor.

Its function is as follows. Accelerates the degradation of transcripts by removing pyrophosphate from the 5'-end of triphosphorylated RNA, leading to a more labile monophosphorylated state that can stimulate subsequent ribonuclease cleavage. This is RNA pyrophosphohydrolase from Alkalilimnicola ehrlichii (strain ATCC BAA-1101 / DSM 17681 / MLHE-1).